The chain runs to 337 residues: 4-hydroxyproline 2-epimerase (337 aa).

Catalysis depends on Cys-91, which acts as the Proton acceptor. Residues 92 to 93 (GH), Asp-252, and 257 to 258 (GT) each bind substrate.

Belongs to the proline racemase family.

It carries out the reaction trans-4-hydroxy-L-proline = cis-4-hydroxy-D-proline. Its function is as follows. Catalyzes the epimerization of trans-4-hydroxy-L-proline (t4LHyp) to cis-4-hydroxy-D-proline (c4DHyp). Is likely involved in a degradation pathway that converts t4LHyp to alpha-ketoglutarate. Displays no proline racemase activity. The protein is 4-hydroxyproline 2-epimerase of Cereibacter sphaeroides (strain ATCC 17029 / ATH 2.4.9) (Rhodobacter sphaeroides).